The primary structure comprises 179 residues: MQAFYLDSEVWSSFDFTRQPSSVILSAEVLAYLDDVDETKRKYFSSTHTWMPIISKMRLNRLTDSAVGKTRVDIALLLLCMKLVPDGVAEDENKPSDLYLTAKQLCATLERNCLLTLRSLQANLLLAVYEVGHAIYPAAALTVGCCVRQGVALGLHNKDAPQLGGNVRSWVDWEERQRG.

The protein localises to the nucleus. Its function is as follows. Transcription factor that probably coregulates the gene clusters that mediates the biosynthesis of botcinin acid and its botcinin derivatives, acetate-derived polyketides that contribute to virulence when combined with the sesquiterpene botrydial. Botcinin acid and its derivatives have been shown to induce chlorosis and necrosis during host plant infection, but also have antifungal activities. This Botryotinia fuckeliana (strain B05.10) (Noble rot fungus) protein is Transcription factor BOA15.